The sequence spans 190 residues: Recombination protein RecR (190 aa).

The C4-type zinc-finger motif lies at 58 to 73 (CEQCGALSENELCEIC). Residues 81–167 (NILCIVESPK…TFSKIAQGIP (87 aa)) enclose the Toprim domain.

Belongs to the RecR family.

May play a role in DNA repair. It seems to be involved in an RecBC-independent recombinational process of DNA repair. It may act with RecF and RecO. This Campylobacter jejuni (strain RM1221) protein is Recombination protein RecR.